The primary structure comprises 193 residues: Protein GrpE (193 aa).

Over residues 1–22 the composition is skewed to basic and acidic residues; it reads MDPKEKEKMAEELNVEETKDTA. Residues 1–45 form a disordered region; it reads MDPKEKEKMAEELNVEETKDTAEEQPQDDQAEEAAPLTHEEQLEK. Residues 23 to 32 are compositionally biased toward acidic residues; sequence EEQPQDDQAE.

This sequence belongs to the GrpE family. Homodimer.

The protein resides in the cytoplasm. Participates actively in the response to hyperosmotic and heat shock by preventing the aggregation of stress-denatured proteins, in association with DnaK and GrpE. It is the nucleotide exchange factor for DnaK and may function as a thermosensor. Unfolded proteins bind initially to DnaJ; upon interaction with the DnaJ-bound protein, DnaK hydrolyzes its bound ATP, resulting in the formation of a stable complex. GrpE releases ADP from DnaK; ATP binding to DnaK triggers the release of the substrate protein, thus completing the reaction cycle. Several rounds of ATP-dependent interactions between DnaJ, DnaK and GrpE are required for fully efficient folding. This chain is Protein GrpE, found in Bacteroides thetaiotaomicron (strain ATCC 29148 / DSM 2079 / JCM 5827 / CCUG 10774 / NCTC 10582 / VPI-5482 / E50).